A 461-amino-acid polypeptide reads, in one-letter code: tRNA modification GTPase MnmE (461 aa).

(6S)-5-formyl-5,6,7,8-tetrahydrofolate is bound by residues Arg22, Glu87, and Arg126. Residues 222 to 382 (GITAVIAGKP…LENKLYEILI (161 aa)) enclose the TrmE-type G domain. Residue Asn232 participates in K(+) binding. GTP contacts are provided by residues 232-237 (NVGKSS), 251-257 (TDIPGTT), 276-279 (DTAG), and 363-365 (SAR). Ser236 serves as a coordination point for Mg(2+). Positions 251, 253, and 256 each coordinate K(+). Residue Thr257 participates in Mg(2+) binding. Lys461 contributes to the (6S)-5-formyl-5,6,7,8-tetrahydrofolate binding site.

Belongs to the TRAFAC class TrmE-Era-EngA-EngB-Septin-like GTPase superfamily. TrmE GTPase family. As to quaternary structure, homodimer. Heterotetramer of two MnmE and two MnmG subunits. K(+) serves as cofactor.

Its subcellular location is the cytoplasm. In terms of biological role, exhibits a very high intrinsic GTPase hydrolysis rate. Involved in the addition of a carboxymethylaminomethyl (cmnm) group at the wobble position (U34) of certain tRNAs, forming tRNA-cmnm(5)s(2)U34. This chain is tRNA modification GTPase MnmE, found in Carboxydothermus hydrogenoformans (strain ATCC BAA-161 / DSM 6008 / Z-2901).